Reading from the N-terminus, the 218-residue chain is Protein GrpE (218 aa).

Residues 1–78 (MSEFNKDDYL…DSADTLTPLG (78 aa)) are disordered. Residues 14 to 58 (PDPSDAEAAAQASSGADASAESGSAQDSAAQAPSNEGADAAPAAA) show a composition bias toward low complexity.

This sequence belongs to the GrpE family. As to quaternary structure, homodimer.

The protein localises to the cytoplasm. In terms of biological role, participates actively in the response to hyperosmotic and heat shock by preventing the aggregation of stress-denatured proteins, in association with DnaK and GrpE. It is the nucleotide exchange factor for DnaK and may function as a thermosensor. Unfolded proteins bind initially to DnaJ; upon interaction with the DnaJ-bound protein, DnaK hydrolyzes its bound ATP, resulting in the formation of a stable complex. GrpE releases ADP from DnaK; ATP binding to DnaK triggers the release of the substrate protein, thus completing the reaction cycle. Several rounds of ATP-dependent interactions between DnaJ, DnaK and GrpE are required for fully efficient folding. The polypeptide is Protein GrpE (Bifidobacterium longum (strain NCC 2705)).